A 609-amino-acid chain; its full sequence is Wee1-like protein kinase (609 aa).

Residues 1 to 10 show a composition bias toward basic and acidic residues; it reads MAFRQSEHEM. Disordered stretches follow at residues 1–88 and 147–166; these read MAFR…SMSP and PLHN…PFTP. Phosphoserine is present on residues serine 23, serine 25, and serine 27. Basic and acidic residues predominate over residues 37–48; sequence RFADDDFDKDTP. Phosphothreonine is present on threonine 47. At serine 52 the chain carries Phosphoserine. The segment covering 153-165 has biased composition (polar residues); the sequence is LPTQDTANVNPFT. The residue at position 165 (threonine 165) is a Phosphothreonine. Phosphoserine is present on serine 168. One can recognise a Protein kinase domain in the interval 239–517; sequence FMQVNVIGVG…SQSIFSHPIL (279 aa). ATP is bound by residues 245-253 and lysine 268; that span reads IGVGEFGVV. The Proton acceptor role is filled by aspartate 361. Residues asparagine 366 and aspartate 412 each coordinate Mg(2+).

This sequence belongs to the protein kinase superfamily. Ser/Thr protein kinase family. WEE1 subfamily. The cofactor is Mg(2+). Post-translationally, phosphorylated during M and G1 phases. Expressed in embryos; expression remains high in the proliferating cells of the central nervous system well after cells in the rest of the embryo have ceased dividing.

It localises to the nucleus. It catalyses the reaction L-tyrosyl-[protein] + ATP = O-phospho-L-tyrosyl-[protein] + ADP + H(+). Negatively regulated by phosphorylation in the M-phase. Acts as a negative regulator of entry into mitosis (G2 to M transition). This kinase specifically phosphorylates and inactivates cyclin B1-complexed CDC2. In Drosophila melanogaster (Fruit fly), this protein is Wee1-like protein kinase.